The chain runs to 782 residues: MRQKTLDVLEFDKIKSLVANETISDLGLEKVNQMMPATNFETVVFQMEETDEIAQIYNKHRLPSLSGLSKVSAFIHRADIGGVLNVSELNLIKRLIQVQNQFKTFYNQLVEEDEGVKYPILDDKMNQLPVLTDLFQQINETCDTYDLYDNASYELQGIRSKISSTNQRIRQNLDRIVKSQANQKKLSDAIVTVRNERNVIPVKAEYRQDFNGIVHDQSASGQTLYIEPSSVVEMNNQISRLRHDEAIEKERILTQLTGYVAADKDALLVAEQVMGQLDFLIAKARCSRSIKGTKPIFKEERTVYLPKAYHPLLNRETVVANTIEFMEDIETVIITGPNTGGKTVTLKTLGLIIVMAQSGLLIPTLDGSQLSVFKNVYCDIGDEQSIEQSLSTFSSHMTNIVEILKNADKHSLVLFDELGAGTDPSEGAALAMSILDHVRKIGSLVMATTHYPELKAYSYNREGVMNASVEFDVDTLSPTYKLLMGVPGRSNAFDISKKLGLSLNIINKAKTMIGTDEKEINEMIESLERNYKRVETQRLELDRLVKEAEQVHDDLSKQYQQFQNYEKSLIEDAKEKANQKIKAATKEADDIIKDLRQLREQKGADVKEHELIDKKKRLDDHYEAKSIKQNVQKQKYDKIVAGDEVKVLSYGQKGEVLEIVNDEEAIVQMGIIKMKLPIEDLEKKQKEKVKPTKMVTRQNRQTIKTELDLRGYRYEDALIELDQYLDQAVLSNYEQVYIIHGKGTGALQKGVQQHLKKHKSVSDFRGGMPSEGGFGVTVATLK.

336-343 (GPNTGGKT) provides a ligand contact to ATP. Positions 707–782 (LDLRGYRYED…GFGVTVATLK (76 aa)) constitute a Smr domain.

It belongs to the DNA mismatch repair MutS family. MutS2 subfamily. As to quaternary structure, homodimer. Binds to stalled ribosomes, contacting rRNA.

In terms of biological role, endonuclease that is involved in the suppression of homologous recombination and thus may have a key role in the control of bacterial genetic diversity. Acts as a ribosome collision sensor, splitting the ribosome into its 2 subunits. Detects stalled/collided 70S ribosomes which it binds and splits by an ATP-hydrolysis driven conformational change. Acts upstream of the ribosome quality control system (RQC), a ribosome-associated complex that mediates the extraction of incompletely synthesized nascent chains from stalled ribosomes and their subsequent degradation. Probably generates substrates for RQC. The polypeptide is Endonuclease MutS2 (Staphylococcus aureus (strain MRSA252)).